A 1169-amino-acid polypeptide reads, in one-letter code: MAEEEVAKLEKHLMLLRQEYVKLQKKLAETEKRCTLLAAQANKENSNESFISRLLAIVAGLYEQEQYSDLKIKVGDRHISAHKFVLAARSDSWSLANLSSTEEIDLSDANPEVTMTMLRWIYTDELEFREDDVFLTELMKLANRFQLQLLRERCEKGVMSLVNVRNCIRFYQTAEELNASTLMNYCAEIIASHWDDLRKEDFSSLSAQLLYKMIKSKTEYPLHKAIKVEREDVVFLYLIEMDSQLPGKLNETDHNGDLALDLALSRRLESIATTLVSHKADVDMVDKNGWSLLHKGIQRGDLFASTFLIKNGALVNAATAGAQETPLHLVALYSPKKYSADVMSEMAQIAEALLQAGANPNMQDSKGRTPLHLSIMARNDCVFSQLLQCKQLDLELKDHEGSTALWLAVQYITVSSDQSVNPFEDLPVVNGTSFDENSFAARLIQRGSNTDAPDVMTGNCLLQRAAGAGNEAAALFLATSGAHANHRNKWGETPLHTACRHGLANLTAELLQQGANPNLQTEEALPVPKESPVLMSSADSIYLQTPLHMAIAYNHPDVVSVILEQKANALHATNNLQIIPDFSLKDSRDQTVLGLALWTGMHTIAAQLLGSGASINDTMSDGQTLLHMAIQRQDSKSALFLLEHQADINVRTQDGETALQLAIKHQLPLVVDAICTRGADMSVPDEKGNPPLWLALASNLEDIASTLVRHGCDATCWGPGPSGCLQTLLHRAVDENNESTACFLIRSGCDVNSPRQPGTNGEGEEEARDGQTPLHLAASWGLEETVQCLLEFGANVNAQDAEGRTPVHVAISNQHSVIIQLLISHPNIELSVRDRQGLTPFACAMTYKNNKAAEAILKRESGAAEQVDNKGRNFLHVAVQNSDIESVLFLISVQANVNSRVQDASKLTPLHLAVQAGSEIIVRNLLLAGAKVNELTKHRQTALHLAAQQDLPTICSVLLENGVDFAAVDENGNNALHLAVMHGRLNNIRALLTECTVDAEAFNLRGQSPLHILGQYGKENAAAIFDLFLECMPEYPLDKPDAEGNTVLLLAYMKGNANLCRAIVRSGVRLGVNNNQGVNIFNYQVATKQLLFRLLDMLSKEPPWCDGSNCYECTAKFGVTTRKHHCRHCGRLLCHKCSTKEIPIIKFDLNKPVRVCNICFDVLTLGGVS.

A2 is subject to N-acetylalanine. In terms of domain architecture, BTB spans 68 to 130 (SDLKIKVGDR…IYTDELEFRE (63 aa)). ANK repeat units follow at residues 217-247 (KTEY…QLPG), 255-284 (NGDL…DVDM), 288-317 (NGWS…LVNA), 322-362 (AQET…NPNM), and 366-396 (KGRT…DLEL). Residue S270 is modified to Phosphoserine. The NPF motif lies at 421-423 (NPF). 16 ANK repeats span residues 490 to 519 (WGET…NPNL), 542 to 572 (YLQT…ALHA), 588 to 617 (RDQT…SIND), 621 to 650 (DGQT…DINV), 654 to 683 (DGET…DMSV), 687 to 716 (KGNP…DATC), 724 to 753 (CLQT…DVNS), 769 to 798 (DGQT…NVNA), 802 to 832 (EGRT…ELSV), 836 to 865 (QGLT…GAAE), 870 to 899 (KGRN…NVNS), 905 to 934 (SKLT…KVNE), 938 to 967 (HRQT…DFAA), 971 to 1001 (NGNN…DAEA), 1005 to 1037 (RGQS…EYPL), and 1043 to 1072 (EGNT…RLGV). The segment at 650 to 759 (VRTQDGETAL…DVNSPRQPGT (110 aa)) is interaction with RHOD and RAB5A. The FYVE-type zinc finger occupies 1104–1164 (WCDGSNCYEC…VCNICFDVLT (61 aa)). Residues C1110, C1113, C1126, C1129, C1134, C1137, C1156, and C1159 each contribute to the Zn(2+) site.

Interacts with RAB5A (in GTP-bound form). Interacts with RHOD (independent of GTP-loaded status). Interacts with EHD1. Interacts with VPS26A; the interaction is independent of EHD1 and is indicative for an association with the cargo recognition subcomplex of the retromer complex. As to expression, expressed in kidney proximal tubule epithelial cells; at protein level.

The protein localises to the cytoplasm. Its subcellular location is the endosome membrane. It localises to the cytoplasmic vesicle. Proposed effector of Rab5. Binds to phosphatidylinositol 3-phosphate (PI(3)P). Involved in homotypic early endosome fusion and to a lesser extent in heterotypic fusion of chlathrin-coated vesicles with early endosomes. Required for correct endosomal localization. Involved in the internalization and trafficking of activated tyrosine kinase receptors such as PDGFRB. Regulates the subcellular localization of the retromer complex in a EHD1-dependent manner. Involved in endosome-to-Golgi transport and biosynthetic transport to late endosomes and lysosomes indicative for a regulation of retromer complex-mediated retrograde transport. Involved in macropinocytosis; the function is dependent on Rab5-GTP. This chain is Rabankyrin-5 (Ankfy1), found in Mus musculus (Mouse).